The sequence spans 94 residues: Protein FAM24B (94 aa).

A signal peptide spans 1–21 (MPVIAGGILAALLLLIVVVLC).

It belongs to the FAM24 family.

The protein localises to the secreted. This is Protein FAM24B (FAM24B) from Homo sapiens (Human).